The primary structure comprises 267 residues: Glutamate 5-kinase (267 aa).

Residue Lys-14 participates in ATP binding. Residues Ser-54, Asp-141, and Asn-157 each coordinate substrate. Residues 177–178 (SD) and 219–225 (TGGMMSK) contribute to the ATP site.

Belongs to the glutamate 5-kinase family.

The protein resides in the cytoplasm. It catalyses the reaction L-glutamate + ATP = L-glutamyl 5-phosphate + ADP. Its pathway is amino-acid biosynthesis; L-proline biosynthesis; L-glutamate 5-semialdehyde from L-glutamate: step 1/2. Its function is as follows. Catalyzes the transfer of a phosphate group to glutamate to form L-glutamate 5-phosphate. This Streptococcus thermophilus protein is Glutamate 5-kinase.